The primary structure comprises 482 residues: Probable glycine dehydrogenase (decarboxylating) subunit 2 (482 aa).

Position 267 is an N6-(pyridoxal phosphate)lysine (lysine 267).

Belongs to the GcvP family. C-terminal subunit subfamily. The glycine cleavage system is composed of four proteins: P, T, L and H. In this organism, the P 'protein' is a heterodimer of two subunits. Requires pyridoxal 5'-phosphate as cofactor.

It carries out the reaction N(6)-[(R)-lipoyl]-L-lysyl-[glycine-cleavage complex H protein] + glycine + H(+) = N(6)-[(R)-S(8)-aminomethyldihydrolipoyl]-L-lysyl-[glycine-cleavage complex H protein] + CO2. In terms of biological role, the glycine cleavage system catalyzes the degradation of glycine. The P protein binds the alpha-amino group of glycine through its pyridoxal phosphate cofactor; CO(2) is released and the remaining methylamine moiety is then transferred to the lipoamide cofactor of the H protein. The polypeptide is Probable glycine dehydrogenase (decarboxylating) subunit 2 (Aquifex aeolicus (strain VF5)).